A 228-amino-acid polypeptide reads, in one-letter code: Expansin-B13 (228 aa).

An N-terminal signal peptide occupies residues 1-22 (MASSSLLLASVVVAAMVSAVSC). Residue Asn32 is glycosylated (N-linked (GlcNAc...) asparagine). In terms of domain architecture, Expansin-like EG45 spans 61-172 (SGACGYKDVD…KEKGSEEWKA (112 aa)). Disulfide bonds link Cys64-Cys92 and Cys100-Cys106. The Expansin-like CBD domain maps to 142 to 223 (GKDEELLKYV…GWKADSVYKS (82 aa)).

Belongs to the expansin family. Expansin B subfamily.

The protein resides in the secreted. It is found in the cell wall. It localises to the membrane. Functionally, may cause loosening and extension of plant cell walls by disrupting non-covalent bonding between cellulose microfibrils and matrix glucans. No enzymatic activity has been found. May be required for rapid internodal elongation in deepwater rice during submergence. This is Expansin-B13 (EXPB13) from Oryza sativa subsp. japonica (Rice).